Reading from the N-terminus, the 215-residue chain is Protein HP-25 homolog 2 (215 aa).

Positions 1–30 (MPGRGGQSLSMVCVDVWILALSVLSVMADA) are cleaved as a signal peptide. The interval 35 to 79 (VTESCDSQGPPGLPGPPGLPGPPGPPGPPGPPGLRGPTGIPGDIE) is disordered. The 34-residue stretch at 43–76 (GPPGLPGPPGLPGPPGPPGPPGPPGLRGPTGIPG) folds into the Collagen-like domain. Residues 45 to 68 (PGLPGPPGLPGPPGPPGPPGPPGL) are compositionally biased toward pro residues. One can recognise a C1q domain in the interval 82–215 (LSPPKSAFAV…GYLLYGNYPG (134 aa)).

It is found in the secreted. This is Protein HP-25 homolog 2 from Bos taurus (Bovine).